Here is a 131-residue protein sequence, read N- to C-terminus: Leptin receptor gene-related protein (131 aa).

The next 4 membrane-spanning stretches (helical) occupy residues 7–27 (LVGL…GCAL), 32–52 (VYWP…HFIA), 69–89 (LAYF…IILA), and 100–120 (GLVL…FLVF).

Belongs to the OB-RGRP/VPS55 family.

It localises to the golgi apparatus membrane. Its subcellular location is the endosome membrane. In terms of biological role, involved in protein trafficking. May be involved in the down-regulation of membrane protein levels. The sequence is that of Leptin receptor gene-related protein (LEPROT) from Gallus gallus (Chicken).